Reading from the N-terminus, the 292-residue chain is MIRRAVVAGQFYPDDAELVEMLKRFFTDLGEEGNSRRITAGVAPHAGYIFSGYTASRTYKAIYEDGLPEVFVILGPNHTGLGSPIAVYPKGEWETPLGRIKVDEKLARRITELSEIADLDDLAHKYEHSIEVQLPFIQYLAELSGKDVKIVPITLGIQDEEVSYALGKAIYEASQELGRDIVVIASTDFMHYGEFYGYVPFRARADELPNLVKEWDMRVIRRILDFDVEGMFEEINAMNHTMCGPGGVGVGIVYSKLAGAIEAELLHYTTSFEVSRSTDAIVGYASIVMRKA.

This sequence belongs to the MEMO1 family.

This Pyrococcus furiosus (strain ATCC 43587 / DSM 3638 / JCM 8422 / Vc1) protein is MEMO1 family protein PF1638.